We begin with the raw amino-acid sequence, 366 residues long: Aminomethyltransferase (366 aa).

This sequence belongs to the GcvT family. The glycine cleavage system is composed of four proteins: P, T, L and H.

It carries out the reaction N(6)-[(R)-S(8)-aminomethyldihydrolipoyl]-L-lysyl-[protein] + (6S)-5,6,7,8-tetrahydrofolate = N(6)-[(R)-dihydrolipoyl]-L-lysyl-[protein] + (6R)-5,10-methylene-5,6,7,8-tetrahydrofolate + NH4(+). Its function is as follows. The glycine cleavage system catalyzes the degradation of glycine. This Bacillus anthracis (strain A0248) protein is Aminomethyltransferase.